The chain runs to 147 residues: Prefoldin subunit alpha (147 aa).

It belongs to the prefoldin alpha subunit family. Heterohexamer of two alpha and four beta subunits.

The protein localises to the cytoplasm. Functionally, molecular chaperone capable of stabilizing a range of proteins. Seems to fulfill an ATP-independent, HSP70-like function in archaeal de novo protein folding. In Saccharolobus islandicus (strain Y.N.15.51 / Yellowstone #2) (Sulfolobus islandicus), this protein is Prefoldin subunit alpha.